Here is a 199-residue protein sequence, read N- to C-terminus: Chaperone protein TorD (199 aa).

It belongs to the TorD/DmsD family. TorD subfamily.

Its subcellular location is the cytoplasm. In terms of biological role, involved in the biogenesis of TorA. Acts on TorA before the insertion of the molybdenum cofactor and, as a result, probably favors a conformation of the apoenzyme that is competent for acquiring the cofactor. This Escherichia coli O127:H6 (strain E2348/69 / EPEC) protein is Chaperone protein TorD.